We begin with the raw amino-acid sequence, 757 residues long: Inhibitor of nuclear factor kappa-B kinase subunit beta (757 aa).

The 286-residue stretch at 15–300 folds into the Protein kinase domain; that stretch reads WEMKERLGTG…DPQYGPNGCF (286 aa). Residues 21 to 29 and K44 each bind ATP; that span reads LGTGGFGNV. D145 functions as the Proton acceptor in the catalytic mechanism. K163 participates in a covalent cross-link: Glycyl lysine isopeptide (Lys-Gly) (interchain with G-Cter in ubiquitin). Residue S177 is modified to Phosphoserine; by TBK1 and PKC/PRKCZ. C179 is subject to S-nitrosocysteine. S181 bears the Phosphoserine; by TBK1, PKC/PRKCZ and PDPK1 mark. The residue at position 191 (P191) is a Hydroxyproline. The leucine-zipper stretch occupies residues 458 to 479; sequence LLRNNSCLSKMKNAMASTAQQL. S670 bears the Phosphoserine; by autocatalysis mark. A Phosphoserine modification is found at S672. Residues S675, S682, S689, S692, S697, S705, S733, and S740 each carry the phosphoserine; by autocatalysis modification. The segment at 683–703 is disordered; that stretch reads HPGQLMSQPSSACDSLPESDK. The segment at 737–742 is NEMO-binding; the sequence is LDWSWL.

Belongs to the protein kinase superfamily. Ser/Thr protein kinase family. I-kappa-B kinase subfamily. As to quaternary structure, component of the I-kappa-B-kinase (IKK) core complex consisting of CHUK, IKBKB and IKBKG; probably four alpha/CHUK-beta/IKBKB dimers are associated with four gamma/IKBKG subunits. The IKK core complex seems to associate with regulatory or adapter proteins to form a IKK-signalosome holo-complex. The IKK complex associates with TERF2IP/RAP1, leading to promote IKK-mediated phosphorylation of RELA/p65. Part of a complex composed of NCOA2, NCOA3, CHUK/IKKA, IKBKB, IKBKG and CREBBP. Part of a 70-90 kDa complex at least consisting of CHUK/IKKA, IKBKB, NFKBIA, RELA, ELP1 and MAP3K14. Found in a membrane raft complex, at least composed of BCL10, CARD11, DPP4 and IKBKB. Interacts with SQSTM1 through PRKCZ or PRKCI. Forms an NGF-induced complex with IKBKB, PRKCI and TRAF6. May interact with MAVS/IPS1. Interacts with NALP2. Interacts with TICAM1. Interacts with FAF1; the interaction disrupts the IKK complex formation. Interacts with ATM. Part of a ternary complex consisting of TANK, IKBKB and IKBKG. Interacts with NIBP; the interaction is direct. Interacts with ARRB1 and ARRB2. Interacts with TRIM21. Interacts with NLRC5; prevents IKBKB phosphorylation and kinase activity. Interacts with PDPK1. Interacts with EIF2AK2/PKR. The phosphorylated form interacts with PPM1A and PPM1B. Interacts with ZNF268 isoform 2; the interaction is further increased in a TNF-alpha-dependent manner. Interacts with IKBKE. Interacts with ZC3H12A. Interacts with AKAP13. Interacts with LRRC14; disrupts IKBKB-IKBKG interaction preventing I-kappa-B-kinase (IKK) core complex formation and leading to a decrease of IKBKB phosphorylation and NF-kappaB activation. Interacts with SASH1. Interacts with ARFIP2. Interacts with FKBP5. Interacts with kinase TBK1; the complex interacts with STAT1, leading to phosphorylation of STAT1 on 'Thr-748' by IKBKB. Upon cytokine stimulation, phosphorylated on Ser-177 and Ser-181 by MEKK1 and/or MAP3K14/NIK as well as TBK1 and PRKCZ; which enhances activity. Phosphorylated by MAP3K7/TAK1 in response to NOD1 and NOD2 signaling, promoting activation and phosphorylation of NF-kappa-B inhibitors, leading to NF-kappa-B activation. Once activated, autophosphorylates on the C-terminal serine cluster; which decreases activity and prevents prolonged activation of the inflammatory response. Phosphorylated by the IKK-related kinases TBK1 and IKBKE, which is associated with reduced CHUK/IKKA and IKBKB activity and NF-kappa-B-dependent gene transcription. Dephosphorylated at Ser-177 and Ser-181 by PPM1A and PPM1B. Post-translationally, ubiquitinated. Monoubiquitination involves TRIM21 that leads to inhibition of Tax-induced NF-kappa-B signaling. 'Ser-163' may not serve as a monoubiquitination site. Ubiquitination on 'Ser-163' may modulate phosphorylation on C-terminal serine residues. In terms of processing, hydroxylated by PHD1/EGLN2, loss of hydroxylation under hypoxic conditions results in activation of NF-kappa-B. Detected in heart (at protein level). Expressed in liver, kidney and spleen.

It localises to the cytoplasm. The protein localises to the nucleus. It is found in the membrane raft. The enzyme catalyses L-seryl-[I-kappa-B protein] + ATP = O-phospho-L-seryl-[I-kappa-B protein] + ADP + H(+). It carries out the reaction L-seryl-[protein] + ATP = O-phospho-L-seryl-[protein] + ADP + H(+). It catalyses the reaction L-threonyl-[protein] + ATP = O-phospho-L-threonyl-[protein] + ADP + H(+). Serine kinase that plays an essential role in the NF-kappa-B signaling pathway which is activated by multiple stimuli such as inflammatory cytokines, bacterial or viral products, DNA damages or other cellular stresses. Acts as a part of the canonical IKK complex in the conventional pathway of NF-kappa-B activation. Phosphorylates inhibitors of NF-kappa-B on 2 critical serine residues. These modifications allow polyubiquitination of the inhibitors and subsequent degradation by the proteasome. In turn, free NF-kappa-B is translocated into the nucleus and activates the transcription of hundreds of genes involved in immune response, growth control, or protection against apoptosis. In addition to the NF-kappa-B inhibitors, phosphorylates several other components of the signaling pathway including NEMO/IKBKG, NF-kappa-B subunits RELA and NFKB1, as well as IKK-related kinases TBK1 and IKBKE. IKK-related kinase phosphorylations may prevent the overproduction of inflammatory mediators since they exert a negative regulation on canonical IKKs. Phosphorylates FOXO3, mediating the TNF-dependent inactivation of this pro-apoptotic transcription factor. Also phosphorylates other substrates including NAA10, NCOA3, BCL10 and IRS1. Phosphorylates RIPK1 at 'Ser-25' which represses its kinase activity and consequently prevents TNF-mediated RIPK1-dependent cell death. Phosphorylates the C-terminus of IRF5, stimulating IRF5 homodimerization and translocation into the nucleus. Following bacterial lipopolysaccharide (LPS)-induced TLR4 endocytosis, phosphorylates STAT1 at 'Thr-748' which restricts interferon signaling and anti-inflammatory responses and promotes innate inflammatory responses. IKBKB-mediated phosphorylation of STAT1 at 'Thr-748' promotes binding of STAT1 to the ARID5A promoter, resulting in transcriptional activation of ARID5A and subsequent ARID5A-mediated stabilization of IL6. It also promotes binding of STAT1 to the IL12B promoter and activation of IL12B transcription. The polypeptide is Inhibitor of nuclear factor kappa-B kinase subunit beta (Ikbkb) (Mus musculus (Mouse)).